The following is a 152-amino-acid chain: Vasotocin-neurophysin VT 1 (152 aa).

Positions 1 to 19 (MSDSFLPTCILCLLALSSA) are cleaved as a signal peptide. Cysteines 20 and 25 form a disulfide. Gly-28 carries the glycine amide modification. 7 cysteine pairs are disulfide-bonded: Cys-40–Cys-84, Cys-43–Cys-57, Cys-51–Cys-74, Cys-58–Cys-64, Cys-91–Cys-103, Cys-97–Cys-115, and Cys-104–Cys-109.

This sequence belongs to the vasopressin/oxytocin family.

Its subcellular location is the secreted. Functionally, vasotocin is an antidiuretic hormone. The polypeptide is Vasotocin-neurophysin VT 1 (Catostomus commersonii (White sucker)).